A 649-amino-acid polypeptide reads, in one-letter code: tRNA-guanine(15) transglycosylase (649 aa).

Asp-88 acts as the Nucleophile in catalysis. 2 residues coordinate substrate: Asp-123 and Ala-194. The Zn(2+) site is built by Cys-280, Cys-282, and Cys-285. The PUA domain occupies 573 to 648 (KYRIVIDSSV…VAATLRGGLK (76 aa)).

This sequence belongs to the archaeosine tRNA-ribosyltransferase family. Zn(2+) is required as a cofactor.

It carries out the reaction guanosine(15) in tRNA + 7-cyano-7-deazaguanine = 7-cyano-7-carbaguanosine(15) in tRNA + guanine. It functions in the pathway tRNA modification; archaeosine-tRNA biosynthesis. Its function is as follows. Exchanges the guanine residue with 7-cyano-7-deazaguanine (preQ0) at position 15 in the dihydrouridine loop (D-loop) of archaeal tRNAs. The chain is tRNA-guanine(15) transglycosylase from Methanococcus maripaludis (strain DSM 14266 / JCM 13030 / NBRC 101832 / S2 / LL).